Consider the following 344-residue polypeptide: Isopentenyl-diphosphate delta-isomerase (344 aa).

Substrate is bound at residue 9-10 (RK). Residues 65–67 (AMT), Ser-95, and Asn-124 contribute to the FMN site. Residue Gln-154 coordinates substrate. Mg(2+) is bound at residue Glu-155. Residues Lys-185, Thr-215, 259–261 (GVR), and 280–281 (SG) each bind FMN.

This sequence belongs to the IPP isomerase type 2 family. In terms of assembly, homooctamer. Dimer of tetramers. Requires FMN as cofactor. NADPH serves as cofactor. Mg(2+) is required as a cofactor.

The protein resides in the cytoplasm. The enzyme catalyses isopentenyl diphosphate = dimethylallyl diphosphate. Its function is as follows. Involved in the biosynthesis of isoprenoids. Catalyzes the 1,3-allylic rearrangement of the homoallylic substrate isopentenyl (IPP) to its allylic isomer, dimethylallyl diphosphate (DMAPP). The polypeptide is Isopentenyl-diphosphate delta-isomerase (Lacticaseibacillus casei (strain BL23) (Lactobacillus casei)).